The sequence spans 780 residues: GATOR2 complex protein WDR24 (780 aa).

WD repeat units follow at residues Ser67 to Gln107, Glu113 to Thr153, Gly156 to Arg196, Ala200 to Ile240, Gln244 to Ala286, and Glu290 to Ala333. The C4-type zinc-finger motif lies at Asn708 to Ala730. Zn(2+) is bound by residues Cys709, Cys712, Cys723, Cys726, Cys733, Cys736, Cys747, Cys750, His752, His755, His758, Cys769, Cys773, His775, and Cys777. The segment at Ser731–Ser780 adopts an RING-type; atypical zinc-finger fold.

Belongs to the WD repeat WDR24 family. As to quaternary structure, component of the GATOR2 subcomplex, composed of MIOS, SEC13, SEH1L, WDR24 and WDR59. The GATOR2 complex interacts with CASTOR1 and CASTOR2; the interaction is negatively regulated by arginine. The GATOR2 complex interacts with SESN1, SESN2 and SESN3; the interaction is negatively regulated by amino acids.

It is found in the lysosome membrane. It catalyses the reaction S-ubiquitinyl-[E2 ubiquitin-conjugating enzyme]-L-cysteine + [acceptor protein]-L-lysine = [E2 ubiquitin-conjugating enzyme]-L-cysteine + N(6)-ubiquitinyl-[acceptor protein]-L-lysine.. Its pathway is protein modification; protein ubiquitination. With respect to regulation, the GATOR2 complex is negatively regulated by the upstream amino acid sensors CASTOR1 and SESN2, which sequester the GATOR2 complex in absence of amino acids. In the presence of abundant amino acids, GATOR2 is released from CASTOR1 and SESN2 and activated. Its function is as follows. Catalytic component of the GATOR2 complex, a multiprotein complex that acts as an activator of the amino acid-sensing branch of the mTORC1 signaling pathway. The GATOR2 complex indirectly activates mTORC1 through the inhibition of the GATOR1 subcomplex. GATOR2 probably acts as an E3 ubiquitin-protein ligase toward GATOR1. In the presence of abundant amino acids, the GATOR2 complex mediates ubiquitination of the NPRL2 core component of the GATOR1 complex, leading to GATOR1 inactivation. In the absence of amino acids, GATOR2 is inhibited, activating the GATOR1 complex. In addition to its role in regulation of the mTORC1 complex, promotes the acidification of lysosomes and facilitates autophagic flux. Within the GATOR2 complex, WDR24 constitutes the catalytic subunit that mediates 'Lys-6'-linked ubiquitination of NPRL2. This Xenopus laevis (African clawed frog) protein is GATOR2 complex protein WDR24.